A 456-amino-acid polypeptide reads, in one-letter code: MHEFTPRQIVEKLNEHVIGQADAKRAVAIALRNRYRRQLLDPSLRDEVTPKNILMIGPTGVGKTEIARRLAKLVRAPFVKIEATKFTEVGYVGRDVESMVRDLVEASLRLVKDEKKEALKERAEAVANERIVDALVGKKASTGLGGGNPFEMLFGGTQKPPEQETANDTADRSVIRQQLFQGQLEDRMIDVDIEERQMDLFSGQQGMEGLANLQDMLGQVMPKKTKKRQLSVKEARPILTAEEAERLLDLNEVHDEAVRRAEQMGIIFVDEIDKIATKGQDSAGVSREGVQRDILPIVEGSTVVTKYGPVKTDHMLFIAAGAFHMAKPSDLIPELQGRFPIRVELDSLTEDDFVKILTEPNQALLKQYKALLGAEQVHVTFTEDAIRQIARIAAQVNDETDNIGARRLYTIMERVLEELSFEAAEMPETDVTITPQYVMDRVGKVADDRDLSQFIL.

Residues I18, 60-65 (GVGKTE), D270, E334, and R406 contribute to the ATP site.

This sequence belongs to the ClpX chaperone family. HslU subfamily. A double ring-shaped homohexamer of HslV is capped on each side by a ring-shaped HslU homohexamer. The assembly of the HslU/HslV complex is dependent on binding of ATP.

Its subcellular location is the cytoplasm. Functionally, ATPase subunit of a proteasome-like degradation complex; this subunit has chaperone activity. The binding of ATP and its subsequent hydrolysis by HslU are essential for unfolding of protein substrates subsequently hydrolyzed by HslV. HslU recognizes the N-terminal part of its protein substrates and unfolds these before they are guided to HslV for hydrolysis. This chain is ATP-dependent protease ATPase subunit HslU, found in Exiguobacterium sibiricum (strain DSM 17290 / CCUG 55495 / CIP 109462 / JCM 13490 / 255-15).